We begin with the raw amino-acid sequence, 230 residues long: Probable septum site-determining protein MinC (230 aa).

This sequence belongs to the MinC family. Interacts with MinD and FtsZ.

Functionally, cell division inhibitor that blocks the formation of polar Z ring septums. Rapidly oscillates between the poles of the cell to destabilize FtsZ filaments that have formed before they mature into polar Z rings. Prevents FtsZ polymerization. The protein is Probable septum site-determining protein MinC of Cronobacter sakazakii (strain ATCC BAA-894) (Enterobacter sakazakii).